The chain runs to 494 residues: 1-aminocyclopropane-1-carboxylate synthase 2 (494 aa).

An N6-(pyridoxal phosphate)lysine modification is found at K279. The interval 474–494 (NVLNSPHTMSPHSPLVRARTY) is disordered. Positions 475–484 (VLNSPHTMSP) are enriched in polar residues.

This sequence belongs to the class-I pyridoxal-phosphate-dependent aminotransferase family. In terms of assembly, homodimer. Pyridoxal 5'-phosphate is required as a cofactor.

It carries out the reaction S-adenosyl-L-methionine = 1-aminocyclopropane-1-carboxylate + S-methyl-5'-thioadenosine + H(+). It functions in the pathway alkene biosynthesis; ethylene biosynthesis via S-adenosyl-L-methionine; ethylene from S-adenosyl-L-methionine: step 1/2. Catalyzes the formation of 1-aminocyclopropane-1-carboxylate, a direct precursor of ethylene in higher plants. This chain is 1-aminocyclopropane-1-carboxylate synthase 2 (ACS2), found in Cucurbita pepo (Vegetable marrow).